We begin with the raw amino-acid sequence, 87 residues long: Anaphase-promoting complex subunit 11 (87 aa).

Residues 35–77 (CVDCKIPGDDCPPVWGVCNHAFHMHCILKWLNANELQQCPMCR) form an RING-type; atypical zinc finger.

This sequence belongs to the RING-box family. The APC/C is composed of at least 13 subunits that stay tightly associated throughout the cell cycle: anapc1, anapc2, anapc3, anapc4, anapc5, anapc6, anapc7, anapc8, anapc10, anapc11, cdc20, cdc26 and cdh1.

It is found in the nucleus. The protein operates within protein modification; protein ubiquitination. Component of the anaphase promoting complex/cyclosome (APC/C), a cell cycle-regulated E3 ubiquitin-protein ligase complex that controls progression through mitosis and the G1 phase of the cell cycle. This chain is Anaphase-promoting complex subunit 11 (anapc11), found in Dictyostelium discoideum (Social amoeba).